Here is a 91-residue protein sequence, read N- to C-terminus: Large ribosomal subunit protein bL27 (91 aa).

The segment at 1–25 is disordered; it reads MAHKKGAASSNNGRDSESKRLGVKR.

This sequence belongs to the bacterial ribosomal protein bL27 family.

This chain is Large ribosomal subunit protein bL27, found in Corynebacterium kroppenstedtii (strain DSM 44385 / JCM 11950 / CIP 105744 / CCUG 35717).